A 1288-amino-acid polypeptide reads, in one-letter code: 5-oxoprolinase (1288 aa).

Positions 1248–1270 are disordered; the sequence is PGGGGYGDPEDPAPPPGSPPLFP. The segment covering 1259–1270 has biased composition (pro residues); the sequence is PAPPPGSPPLFP. S1265 is subject to Phosphoserine.

It belongs to the oxoprolinase family. As to quaternary structure, homodimer. As to expression, expressed in testis, kidney and liver.

The protein localises to the cytoplasm. It is found in the cytosol. It catalyses the reaction 5-oxo-L-proline + ATP + 2 H2O = L-glutamate + ADP + phosphate + H(+). Catalyzes the cleavage of 5-oxo-L-proline to form L-glutamate coupled to the hydrolysis of ATP to ADP and inorganic phosphate. In Rattus norvegicus (Rat), this protein is 5-oxoprolinase (Oplah).